Consider the following 632-residue polypeptide: Maltase 1 (632 aa).

The segment covering 1–29 (MEEGERWREGHVYQRSSETRKPTNYDRPD) has biased composition (basic and acidic residues). The disordered stretch occupies residues 1–30 (MEEGERWREGHVYQRSSETRKPTNYDRPDS). Asparagine 179 and asparagine 212 each carry an N-linked (GlcNAc...) asparagine glycan. The active-site Nucleophile is aspartate 280. The N-linked (GlcNAc...) asparagine glycan is linked to asparagine 333. Glutamate 348 acts as the Proton donor in catalysis. Residues asparagine 461, asparagine 575, and asparagine 578 are each glycosylated (N-linked (GlcNAc...) asparagine).

Belongs to the glycosyl hydrolase 13 family.

The enzyme catalyses Hydrolysis of terminal, non-reducing (1-&gt;4)-linked alpha-D-glucose residues with release of alpha-D-glucose.. The sequence is that of Maltase 1 (Mal-B1) from Drosophila virilis (Fruit fly).